The sequence spans 85 residues: Large ribosomal subunit protein bL27 (85 aa).

The protein belongs to the bacterial ribosomal protein bL27 family.

This chain is Large ribosomal subunit protein bL27, found in Vesicomyosocius okutanii subsp. Calyptogena okutanii (strain HA).